The chain runs to 266 residues: Killer cell lectin-like receptor 3 (266 aa).

Over 1-48 (MSEPEVTYSTVRLHKSSGLQKLVRHEETQGPREVGNRKCSAPWQLIVK) the chain is Cytoplasmic. A helical; Signal-anchor for type II membrane protein membrane pass occupies residues 49–69 (ALGILCFLLLVTVAVLAVKIF). Residues 70 to 266 (QYNQHKQEIN…CGKKLDKFPD (197 aa)) lie on the Extracellular side of the membrane. Residues Asn79, Asn87, Asn104, and Asn113 are each glycosylated (N-linked (GlcNAc...) asparagine). Residues 147–151 (WFCYS) form an involved in dimerization region. Cys149 and Cys154 form a disulfide bridge. The C-type lectin domain occupies 150-258 (YSTKCYYFIM…CNIPYYCICG (109 aa)). Residue Asn160 is glycosylated (N-linked (GlcNAc...) asparagine). 5 implicated in MHC class I binding regions span residues 160–162 (NKT), 195–196 (IP), 207–208 (KK), 224–233 (MKIRKMNFKS), and 240–245 (SKARIE). Disulfide bonds link Cys167/Cys255, Cys171/Cys257, and Cys236/Cys249.

In terms of assembly, homodimer; disulfide-linked.

It is found in the membrane. In terms of biological role, receptor on natural killer (NK) cells for class I MHC. This Mus musculus (Mouse) protein is Killer cell lectin-like receptor 3 (Klra3).